The sequence spans 529 residues: E3 ubiquitin-protein ligase arih1 (529 aa).

2 disordered regions span residues 1-30 (MDSDEGYNYEFDDEEECSEDSGADEHEDDL) and 49-68 (GICGEGGGSALGPGPGGEEE). Residues 51 to 64 (CGEGGGSALGPGPG) are compositionally biased toward gly residues. The interval 77-125 (TAEQILQHMVECIREVNEVIQNPATITRILLSHFNWDKEKLMERYFDGN) is UBA-like. The segment at 154–365 (QDMPCQICYL…SAWYNCNRYN (212 aa)) is TRIAD supradomain. Zn(2+)-binding residues include cysteine 158, cysteine 161, cysteine 175, histidine 177, cysteine 180, cysteine 183, cysteine 203, cysteine 208, cysteine 248, cysteine 253, cysteine 269, cysteine 271, cysteine 276, cysteine 279, histidine 284, cysteine 289, cysteine 316, and cysteine 319. The RING-type 1 zinc-finger motif lies at 158 to 208 (CQICYLNYPNSYFTGLECGHKFCMQCWSEYLTTKIIEEGMGQTISCPAHGC). The IBR-type zinc-finger motif lies at 228–289 (LKYQHLITNS…GENWHDPVKC (62 aa)). Residues 316–347 (CPKCHVTIEKDGGCNHMVCRNQNCKAEFCWVC) form an RING-type 2; atypical zinc finger. Residue cysteine 329 is part of the active site. Cysteine 334, cysteine 339, cysteine 344, cysteine 347, histidine 354, and cysteine 361 together coordinate Zn(2+). The tract at residues 380–529 (RAALQRYLFY…EKDLWEYIED (150 aa)) is ariadne domain.

It belongs to the RBR family. Ariadne subfamily. Interacts (via the first RING-type zinc finger) with ube2l3. Associates with cullin-RING ubiquitin ligase (CRL) complexes containing neddylated cullin.

It is found in the cytoplasm. Its subcellular location is the nucleus. The catalysed reaction is [E2 ubiquitin-conjugating enzyme]-S-ubiquitinyl-L-cysteine + [acceptor protein]-L-lysine = [E2 ubiquitin-conjugating enzyme]-L-cysteine + [acceptor protein]-N(6)-ubiquitinyl-L-lysine.. It participates in protein modification; protein ubiquitination. Autoinhibited by the ariadne domain, which masks the second RING-type zinc finger that contains the active site and inhibits the E3 activity. Inhibition is relieved upon binding to neddylated cullin-RING ubiquitin ligase complexes, which activate the E3 ligase activity of ARIH1. In terms of biological role, E3 ubiquitin-protein ligase, which catalyzes ubiquitination of target proteins together with ubiquitin-conjugating enzyme E2 ube2l3. Acts as an atypical E3 ubiquitin-protein ligase by working together with cullin-RING ubiquitin ligase (CRL) complexes and initiating ubiquitination of CRL substrates: associates with CRL complexes and specifically mediates addition of the first ubiquitin on CRLs targets. The initial ubiquitin is then elongated. E3 ubiquitin-protein ligase activity is activated upon binding to neddylated cullin-RING ubiquitin ligase complexes. This is E3 ubiquitin-protein ligase arih1 (arih1) from Xenopus tropicalis (Western clawed frog).